The primary structure comprises 528 residues: OLD nuclease (528 aa).

The interval 1–153 (MLKRLQVKNF…LAQHLPSIRG (153 aa)) is ATPase domain N-terminus. 31-35 (GAGKT) is a binding site for ATP. A dimerization domain region spans residues 154-245 (SILGRLLQPV…RESDLTLPGD (92 aa)). The segment at 246–369 (ELGLGIQSAI…FDTARNEVLF (124 aa)) is ATPase domain C-terminus. The tract at residues 370 to 528 (AKRALLVEGY…IRQVTRPMEE (159 aa)) is toprim domain. A divalent metal cation contacts are provided by E377, D381, D431, and D433. The interval 440 to 461 (RADEETRRKQEQENKAEQEKNQ) is disordered. Residues S478 and E480 each coordinate a divalent metal cation. The Stabilizes transition state or protonates leaving group role is filled by R487.

The protein belongs to the class 1 OLD nuclease family. Homodimer. Mg(2+) is required as a cofactor. It depends on Mn(2+) as a cofactor. The cofactor is Ca(2+).

The enzyme catalyses Exonucleolytic cleavage in the 5'- to 3'-direction to yield nucleoside 5'-phosphates.. Its function is as follows. An exodeoxyribonuclease that degrades linear or supercoiled dsDNA from 5'-3'. Nicks and linearizes circular DNA. Activity is not stimulated by ATP or AMP-PNP, although it has DNA-stimulated ATPase activity. This chain is OLD nuclease, found in Thermus scotoductus (strain ATCC 700910 / SA-01).